The following is a 142-amino-acid chain: uncharacterized protein (142 aa).

One can recognise a Peptidase C39 domain in the interval 18-137; the sequence is QSRSYSCGPA…RIFTGNVLVV (120 aa).

This is an uncharacterized protein from Methanothermobacter thermautotrophicus (strain ATCC 29096 / DSM 1053 / JCM 10044 / NBRC 100330 / Delta H) (Methanobacterium thermoautotrophicum).